The chain runs to 438 residues: UDP-N-acetylmuramoylalanine--D-glutamate ligase (438 aa).

An ATP-binding site is contributed by 115-121 (GSNGKST).

Belongs to the MurCDEF family.

It localises to the cytoplasm. The catalysed reaction is UDP-N-acetyl-alpha-D-muramoyl-L-alanine + D-glutamate + ATP = UDP-N-acetyl-alpha-D-muramoyl-L-alanyl-D-glutamate + ADP + phosphate + H(+). Its pathway is cell wall biogenesis; peptidoglycan biosynthesis. Its function is as follows. Cell wall formation. Catalyzes the addition of glutamate to the nucleotide precursor UDP-N-acetylmuramoyl-L-alanine (UMA). The protein is UDP-N-acetylmuramoylalanine--D-glutamate ligase of Vibrio atlanticus (strain LGP32) (Vibrio splendidus (strain Mel32)).